A 155-amino-acid chain; its full sequence is Ribosomal RNA large subunit methyltransferase H (155 aa).

Residues leucine 72, glycine 103, and 122–127 (LSDLTL) contribute to the S-adenosyl-L-methionine site.

It belongs to the RNA methyltransferase RlmH family. In terms of assembly, homodimer.

Its subcellular location is the cytoplasm. It carries out the reaction pseudouridine(1915) in 23S rRNA + S-adenosyl-L-methionine = N(3)-methylpseudouridine(1915) in 23S rRNA + S-adenosyl-L-homocysteine + H(+). Specifically methylates the pseudouridine at position 1915 (m3Psi1915) in 23S rRNA. The polypeptide is Ribosomal RNA large subunit methyltransferase H (Acidovorax sp. (strain JS42)).